Reading from the N-terminus, the 67-residue chain is Metallothionein-B (67 aa).

Belongs to the metallothionein superfamily. Type 4 family.

In terms of biological role, metallothioneins have a high content of cysteine residues that bind various heavy metals. The protein is Metallothionein-B of Sphaerechinus granularis (Purple sea urchin).